We begin with the raw amino-acid sequence, 517 residues long: Cytochrome P450 monooxygenase stcB (517 aa).

Cys-461 lines the heme pocket.

This sequence belongs to the cytochrome P450 family. Requires heme as cofactor.

The protein operates within mycotoxin biosynthesis; sterigmatocystin biosynthesis. Its function is as follows. Cytochrome P450 monooxygenase; part of the gene cluster that mediates the biosynthesis of sterigmatocystin (ST), a polyketide-derived furanocoumarin which is part of the most toxic and carcinogenic compounds among the known mycotoxins. The first step in the biosynthesis of sterigmatocystin is the production of hexanoate by the fatty acid synthase (FAS) units stcJ and stcK. The polyketide backbone is assembled by the non-reducing polyketide synthase stcA by condensation of the starter hexanoyl-CoA and 7 malonyl-CoA extender units followed by cyclization and release of norsolorinic acid. Norsolorinic acid is the first stable intermediate in the biosynthesis of sterigmatocystin and is converted into averantin (AVN) by the ketoreductase stcE which reduces the hexanoate ketone to an alcohol. Averantin is then oxidized into 5'-hydroxyaverantin (HAVN) by the cytochrome P450 monooxygenase stcF. 5'-hydroxyaverantin is further converted to 5'-oxyaverantin (OAVN) by the 5'-hydroxyaverantin dehydrogenase stcG. The next step is the conversion of OAVN into averufin (AVF) which is catalyzed by a yet to be identified enzyme. The cytochrome P450 monooxygenase stcB and the flavin-binding monooxygenase stcW are both required for the conversion of averufin to 1-hydroxyversicolorone. The esterase stcI probably catalyzes the formation of versiconal hemiacetal acetate from 1-hydroxyversicolorone. The oxydoreductase stcN then probably catalyzes the biosynthetic step from versiconal to versicolorin B (VERB). The next step is performed by the versicolorin B desaturase stcL to produce versicolorin A (VERA). The ketoreductase stcU and the cytochrome P450 monooxygenase stcS are involved in the conversion of versicolorin A to demethylsterigmatocystin. The Baeyer-Villiger oxidas stcQ and the reductase stcR might be involved in the biosynthetic step from versicolorin A to demethylsterigmatocystin. The final step in the biosynthesis of sterigmatocystin is the methylation of demethylsterigmatocystin catalyzed by the methyltransferase stcP. In Emericella nidulans (strain FGSC A4 / ATCC 38163 / CBS 112.46 / NRRL 194 / M139) (Aspergillus nidulans), this protein is Cytochrome P450 monooxygenase stcB.